The following is a 342-amino-acid chain: L-threonine 3-dehydrogenase (342 aa).

Cys38 provides a ligand contact to Zn(2+). Active-site charge relay system residues include Thr40 and His43. Zn(2+) is bound by residues His63, Glu64, Cys93, Cys96, Cys99, and Cys107. NAD(+) contacts are provided by residues Ile175, Asp195, Arg200, 262–264, and 286–287; these read LGI and IY.

It belongs to the zinc-containing alcohol dehydrogenase family. Homotetramer. It depends on Zn(2+) as a cofactor.

The protein resides in the cytoplasm. The catalysed reaction is L-threonine + NAD(+) = (2S)-2-amino-3-oxobutanoate + NADH + H(+). Its pathway is amino-acid degradation; L-threonine degradation via oxydo-reductase pathway; glycine from L-threonine: step 1/2. Functionally, catalyzes the NAD(+)-dependent oxidation of L-threonine to 2-amino-3-ketobutyrate. The polypeptide is L-threonine 3-dehydrogenase (Burkholderia lata (strain ATCC 17760 / DSM 23089 / LMG 22485 / NCIMB 9086 / R18194 / 383)).